We begin with the raw amino-acid sequence, 83 residues long: Sulfur carrier protein TusA (83 aa).

Cys20 (cysteine persulfide intermediate) is an active-site residue.

This sequence belongs to the sulfur carrier protein TusA family.

The protein resides in the cytoplasm. Sulfur carrier protein which probably makes part of a sulfur-relay system. The protein is Sulfur carrier protein TusA of Pseudoalteromonas atlantica (strain T6c / ATCC BAA-1087).